The chain runs to 331 residues: MTIKVGINGFGRIGRIVFRAAQKRSDIEIVAINDLLDAEYMAYMLKYDSTHGRFDGTVEVKDGHLIVNGKKIRVTAERDPANLKWDEVGVDVVAEATGIFLTDETARKHITAGAKKVVLTGPSKDNTPMFVKGANFDKYEGQDIVSNASCTTNCLAPLAKVINDNFGIIEGLMTTVHATTATQKTVDGPSHKDWRGGRGASQNIIPSSTGAAKAVGKVLPELNGKLTGMAFRVPTPNVSVVDLTVRLEKAATYEQIKAAVKAAAEGEMKGVLGYTEDDVVSTDFNGEVCTSVFDAKAGIALNDNFVKLVSWYDNETGYSNKVLDLIAHISK.

NAD(+) is bound by residues 12-13, D34, R78, and T120; that span reads RI. D-glyceraldehyde 3-phosphate is bound by residues 149–151, T180, 209–210, and R232; these read SCT and TG. C150 serves as the catalytic Nucleophile. An NAD(+)-binding site is contributed by N314.

This sequence belongs to the glyceraldehyde-3-phosphate dehydrogenase family. In terms of assembly, homotetramer.

It localises to the cytoplasm. It carries out the reaction D-glyceraldehyde 3-phosphate + phosphate + NAD(+) = (2R)-3-phospho-glyceroyl phosphate + NADH + H(+). The protein operates within carbohydrate degradation; glycolysis; pyruvate from D-glyceraldehyde 3-phosphate: step 1/5. In terms of biological role, catalyzes the oxidative phosphorylation of glyceraldehyde 3-phosphate (G3P) to 1,3-bisphosphoglycerate (BPG) using the cofactor NAD. The first reaction step involves the formation of a hemiacetal intermediate between G3P and a cysteine residue, and this hemiacetal intermediate is then oxidized to a thioester, with concomitant reduction of NAD to NADH. The reduced NADH is then exchanged with the second NAD, and the thioester is attacked by a nucleophilic inorganic phosphate to produce BPG. This is Glyceraldehyde-3-phosphate dehydrogenase (gapA) from Salmonella typhi.